Consider the following 292-residue polypeptide: Tetratricopeptide repeat protein 1 (292 aa).

Residues 20–125 (TDPQEAECLH…SSRLKEEGNE (106 aa)) form a disordered region. Composition is skewed to basic and acidic residues over residues 36-49 (KEQH…KDVD) and 75-85 (GADKLENKPED). Residues 86–98 (DMNPSELDEEYLM) show a composition bias toward acidic residues. Phosphoserine is present on S90. Basic and acidic residues predominate over residues 99–125 (ELEKNMPDEEKKRRREESSRLKEEGNE). 3 TPR repeats span residues 116-149 (SSRL…CPSC), 155-188 (SVLF…NPSY), and 189-222 (IRAI…DPSV).

In terms of assembly, interacts with the GAP domain of NF1. Interacts (via TPR repeats) with HSP90AA1 and HSPA8.

The polypeptide is Tetratricopeptide repeat protein 1 (TTC1) (Bos taurus (Bovine)).